The chain runs to 587 residues: ATP-dependent lipid A-core flippase (587 aa).

The next 5 helical transmembrane spans lie at 31–51 (LIAS…LIYL), 68–88 (LKIM…TNFI), 145–165 (GSLI…AVMF), 169–189 (WELT…ITIV), and 259–279 (VQII…TPLI). The ABC transmembrane type-1 domain maps to 32–315 (IASGIALVFN…LTNVNSQFQR (284 aa)). The region spanning 347–583 (LEFKNVSFAY…NGAYKQLYSM (237 aa)) is the ABC transporter domain. 381–388 (GRSGSGKS) contributes to the ATP binding site.

Belongs to the ABC transporter superfamily. Lipid exporter (TC 3.A.1.106) family. As to quaternary structure, homodimer.

The protein localises to the cell inner membrane. It carries out the reaction ATP + H2O + lipid A-core oligosaccharideSide 1 = ADP + phosphate + lipid A-core oligosaccharideSide 2.. Functionally, involved in lipopolysaccharide (LPS) biosynthesis. Translocates lipid A-core from the inner to the outer leaflet of the inner membrane. Transmembrane domains (TMD) form a pore in the inner membrane and the ATP-binding domain (NBD) is responsible for energy generation. In Haemophilus influenzae (strain 86-028NP), this protein is ATP-dependent lipid A-core flippase.